The following is a 1090-amino-acid chain: Exocyst complex component SEC5A (1090 aa).

The disordered stretch occupies residues 18–128 (LKEQAKRDLT…ARKEDDGAWD (111 aa)). The segment covering 45–69 (QQPRQQKPVAAAAAPPKKSAAAVRK) has biased composition (low complexity). Residues 109–124 (RGSDVREKGRARKEDD) show a composition bias toward basic and acidic residues. Position 180 is a phosphoserine (Ser180). Disordered stretches follow at residues 759-783 (TSRQ…NTYG), 987-1010 (VETP…DKQS), and 1046-1090 (APLE…PRRR). The segment covering 998–1009 (RGSEDTVSDDKQ) has biased composition (basic and acidic residues). Positions 1058-1082 (TYSSFRGSMDSPSRNYRGSQSSGSP) are enriched in polar residues.

This sequence belongs to the SEC5 family. The exocyst complex is composed of SEC3, SEC5, SEC6, SEC8, SEC10, EXO70A1 and EXO84B. Interacts with SEC3A and EXO70B1. Binds to EXO70H1 and EXO70B2. Binds directly to B1L.

Its subcellular location is the cytoplasm. It is found in the cytosol. It localises to the secreted. The protein localises to the extracellular exosome. Functionally, component of the exocyst complex involved in the docking of exocytic vesicles with fusion sites on the plasma membrane during regulated or polarized secretion. Involved in polarized cell growth and organ morphogenesis. During cytokinesis, involved in cell plate initiation, cell plate maturation and formation of new primary cell wall. Probable component of an exocyst subcomplex specifically involved in autophagy-related, Golgi-independent membrane traffic to the vacuole. Regulates autophagosome formation and autophagy-related Golgi-independent import into the vacuole. This chain is Exocyst complex component SEC5A, found in Arabidopsis thaliana (Mouse-ear cress).